Here is a 746-residue protein sequence, read N- to C-terminus: Steroid receptor seven-up, isoform A (746 aa).

A disordered region spans residues 38 to 191 (PPHSAWHEPP…HSQSSNSGSQ (154 aa)). Residues 56 to 68 (AASAGPGTTTGSV) show a composition bias toward low complexity. Over residues 83-101 (QQSAVIKQDLSCPSLNQAG) the composition is skewed to polar residues. Gly residues predominate over residues 122 to 141 (GSAGGHHSGSGSGSGSGVNP). Residues 158-170 (MLTSIKGQPTGCG) show a composition bias toward polar residues. The span at 171–191 (STTPSSQANSSHSQSSNSGSQ) shows a compositional bias: low complexity. Positions 197–272 (NIECVVCGDK…MGMRREAVQR (76 aa)) form a DNA-binding region, nuclear receptor. 2 consecutive NR C4-type zinc fingers follow at residues 200-220 (CVVC…CEGC) and 236-260 (CRGS…LKKC). The 250-residue stretch at 307 to 556 (YLSSYISLLL…PLVPSAGSAF (250 aa)) folds into the NR LBD domain. The disordered stretch occupies residues 579 to 645 (QATPPSSGGG…APAPVPTSSV (67 aa)). Polar residues predominate over residues 592 to 605 (GHNNSSGLGASLPT). The segment covering 606 to 645 (QSQSGSSSRNLTASPLSTSLATAPAPASASAPAPVPTSSV) has biased composition (low complexity).

Belongs to the nuclear hormone receptor family. NR2 subfamily. Expressed in several embryonic tissues; dorsal vessel, oenocyte and fat body. CNS expression is dynamic and confined to temporally restricted subsections of the NB lineage; expressed in many NB and GMCs, but only a small number of neurons.

The protein localises to the nucleus. Functionally, receptor that is required in photoreceptors R1, R3, R4 and R6 during eye development; generation of the ganglion mother cell-2 (GMC-2) fate in the nb7-3 lineage, coinciding with the transition in the expression of HB to KR in the neuroblasts (NBs). This chain is Steroid receptor seven-up, isoform A (svp), found in Drosophila melanogaster (Fruit fly).